We begin with the raw amino-acid sequence, 144 residues long: MSYAEFDADVVIDARDCILGRVASQVAERALDGERIAVVNAEQAVITGSEDDIMEVYRKRDEVGSDRGPRYPKRPDRIFKRSVRGMLPYKTTRGREAFENVRIYMGNPYEEAEVLEDTSLDRLSNIKFVSLGEVSENLGANVTW.

It belongs to the universal ribosomal protein uL13 family. In terms of assembly, part of the 50S ribosomal subunit.

Functionally, this protein is one of the early assembly proteins of the 50S ribosomal subunit, although it is not seen to bind rRNA by itself. It is important during the early stages of 50S assembly. This Natronomonas pharaonis (strain ATCC 35678 / DSM 2160 / CIP 103997 / JCM 8858 / NBRC 14720 / NCIMB 2260 / Gabara) (Halobacterium pharaonis) protein is Large ribosomal subunit protein uL13.